The chain runs to 555 residues: HERV-H_2q24.1 provirus ancestral Env polyprotein (555 aa).

A signal peptide spans 1-35 (MILAGRAPSNTSTLMKFYSLLLYSLLFSFPFLYHP). Residues 36 to 515 (LPLPSYLHHT…WALSNWMSWV (480 aa)) lie on the Extracellular side of the membrane. N-linked (GlcNAc...) asparagine glycosylation is present at Asn47. Residues 64-67 (CWLC) carry the CXXC motif. N-linked (GlcNAc...) asparagine glycosylation is found at Asn222, Asn265, Asn283, Asn352, and Asn370. The tract at residues 388 to 408 (VIPLIPLMVGLGLSASTIALS) is fusion peptide. Residue Asn475 is glycosylated (N-linked (GlcNAc...) asparagine). The helical transmembrane segment at 516 to 536 (LPILSPLIPIFLLLLFGPCIF) threads the bilayer. Residues 537-555 (HLVSQFIQNRIQAITNHSI) are Cytoplasmic-facing.

It belongs to the gamma type-C retroviral envelope protein family. HERV class-I H env subfamily. The surface (SU) and transmembrane (TM) proteins form a heterodimer. SU and TM are attached by noncovalent interactions or by a labile interchain disulfide bond. Post-translationally, specific enzymatic cleavages in vivo yield the mature SU and TM proteins. In terms of tissue distribution, low expression in testis.

The protein resides in the virion. It is found in the cell membrane. Retroviral envelope proteins mediate receptor recognition and membrane fusion during early infection. Endogenous envelope proteins may have kept, lost or modified their original function during evolution. This endogenous envelope protein has lost its original fusogenic properties. Its function is as follows. SU mediates receptor recognition. In terms of biological role, TM anchors the envelope heterodimer to the viral membrane through one transmembrane domain. The other hydrophobic domain, called fusion peptide, mediates fusion of the viral membrane with the target cell membrane. This chain is HERV-H_2q24.1 provirus ancestral Env polyprotein, found in Homo sapiens (Human).